A 758-amino-acid chain; its full sequence is 5-methyltetrahydropteroyltriglutamate--homocysteine methyltransferase (758 aa).

Residues 17 to 20 (RELK) and lysine 117 contribute to the 5-methyltetrahydropteroyltri-L-glutamate site. L-homocysteine contacts are provided by residues 434–436 (IGS) and glutamate 487. Residues 434–436 (IGS) and glutamate 487 contribute to the L-methionine site. Residues 518–519 (RC) and tryptophan 564 contribute to the 5-methyltetrahydropteroyltri-L-glutamate site. Aspartate 602 lines the L-homocysteine pocket. Aspartate 602 provides a ligand contact to L-methionine. Glutamate 608 is a 5-methyltetrahydropteroyltri-L-glutamate binding site. Histidine 644, cysteine 646, and glutamate 668 together coordinate Zn(2+). Histidine 697 (proton donor) is an active-site residue. Cysteine 729 is a Zn(2+) binding site.

It belongs to the vitamin-B12 independent methionine synthase family. It depends on Zn(2+) as a cofactor.

It catalyses the reaction 5-methyltetrahydropteroyltri-L-glutamate + L-homocysteine = tetrahydropteroyltri-L-glutamate + L-methionine. It functions in the pathway amino-acid biosynthesis; L-methionine biosynthesis via de novo pathway; L-methionine from L-homocysteine (MetE route): step 1/1. In terms of biological role, catalyzes the transfer of a methyl group from 5-methyltetrahydrofolate to homocysteine resulting in methionine formation. This Sodalis glossinidius (strain morsitans) protein is 5-methyltetrahydropteroyltriglutamate--homocysteine methyltransferase.